A 79-amino-acid chain; its full sequence is Small ribosomal subunit protein bS18 (79 aa).

The protein belongs to the bacterial ribosomal protein bS18 family. Part of the 30S ribosomal subunit. Forms a tight heterodimer with protein bS6.

Functionally, binds as a heterodimer with protein bS6 to the central domain of the 16S rRNA, where it helps stabilize the platform of the 30S subunit. This Bacillus licheniformis (strain ATCC 14580 / DSM 13 / JCM 2505 / CCUG 7422 / NBRC 12200 / NCIMB 9375 / NCTC 10341 / NRRL NRS-1264 / Gibson 46) protein is Small ribosomal subunit protein bS18.